The primary structure comprises 482 residues: ATP synthase subunit beta (482 aa).

168–175 provides a ligand contact to ATP; that stretch reads GGAGVGKT.

It belongs to the ATPase alpha/beta chains family. In terms of assembly, F-type ATPases have 2 components, CF(1) - the catalytic core - and CF(0) - the membrane proton channel. CF(1) has five subunits: alpha(3), beta(3), gamma(1), delta(1), epsilon(1). CF(0) has three main subunits: a(1), b(2) and c(9-12). The alpha and beta chains form an alternating ring which encloses part of the gamma chain. CF(1) is attached to CF(0) by a central stalk formed by the gamma and epsilon chains, while a peripheral stalk is formed by the delta and b chains.

The protein resides in the cell membrane. The enzyme catalyses ATP + H2O + 4 H(+)(in) = ADP + phosphate + 5 H(+)(out). Its function is as follows. Produces ATP from ADP in the presence of a proton gradient across the membrane. The catalytic sites are hosted primarily by the beta subunits. The polypeptide is ATP synthase subunit beta (Corynebacterium urealyticum (strain ATCC 43042 / DSM 7109)).